The following is a 211-amino-acid chain: Stromal cell-derived factor 2 (211 aa).

Residues 1 to 18 (MAVLSLLLLGGLWSAVGA) form the signal peptide. MIR domains are found at residues 21-75 (MAVV…IRGK), 83-138 (GTPI…VLCN), and 139-193 (GPYW…AMEG).

In terms of tissue distribution, ubiquitously expressed with highest expression in liver and kidney.

The protein localises to the secreted. In Mus musculus (Mouse), this protein is Stromal cell-derived factor 2 (Sdf2).